Reading from the N-terminus, the 379-residue chain is Glutamate 5-kinase (379 aa).

Lys-15 provides a ligand contact to ATP. Residues Ser-56, Asp-143, and Asn-155 each contribute to the substrate site. 175-176 (SD) is an ATP binding site. Residues 281-358 (KGTLTIDAGA…CDAAQILGIS (78 aa)) form the PUA domain.

This sequence belongs to the glutamate 5-kinase family.

Its subcellular location is the cytoplasm. It carries out the reaction L-glutamate + ATP = L-glutamyl 5-phosphate + ADP. It participates in amino-acid biosynthesis; L-proline biosynthesis; L-glutamate 5-semialdehyde from L-glutamate: step 1/2. In terms of biological role, catalyzes the transfer of a phosphate group to glutamate to form L-glutamate 5-phosphate. The polypeptide is Glutamate 5-kinase (Nitrobacter hamburgensis (strain DSM 10229 / NCIMB 13809 / X14)).